The chain runs to 801 residues: MAQPLLSLRQRFESTFSSHRQEIFMFLSRIQSLGNGILKPHQLFSEFQAISKIDRLKLEDSALVQLLNSAQEAIVCSPWIALAIRLRPGVWEYVRLNVHQLVVEELTVPDYLYLKEELVNASSNGNFVLELDFAPFTASIPRPTLTKSIGNGVEFLNRHLSAKMFQDKDSMHPLLDFLRLHHHNGRTLMLNNRVQTVNGLQDILRIAGEYLSKLPSDTPYSDFEHKFQEIGFERGWGDTAEHVSEMFHMLLDLLEAPDACTLETFLGKIPMIFNVVILSPHGYFAQENVLGYPDTGGQVVYILDQVPAMEREMTKRIKEQGLDIIPRILIVTRLLPDAVGTTCNLRLEKVFGAEHSHILRVPFRTEKGILRKWISRFEVWPYMETFTEDVAKEIALELKAKPDLIIGNYSEGNLVASLLANKLGVTQCTIAHALEKTKYPDSDIYWEKFDKKYHFSSQFTADLIAMNHTDFIITSTFQEIAGSKDTVGQYESHTAFTMPGLYRVVHGIDVFDPKFNIVSPGADTSVYYPYTEKKRRLTALHPEIEDLLFSSVENKEHICVLKDRYKPILFTMARLDNVKNLTGIVEWYAKNPKLRELVNLVVVGGDRRKESKDLEEQAQMKKMYGLIDTYKLNGQFRWISAQKNRVRNGELYRCIADTKGAFVQPAFYEAFGLTVIEAMTCGLPTFATIHGGPAEIIVHGTSGFHIDPYHGEKAAELIVNFFERCKTEPSHWETISAGGLKRIQEKYTWQIYSERLLTLGGVYGFWKHVSKLDRIEIRRYLEMFCALKYRNLAESVPLAVD.

Residues 271-748 (MIFNVVILSP…GLKRIQEKYT (478 aa)) are GT-B glycosyltransferase.

The protein belongs to the glycosyltransferase 1 family. Plant sucrose synthase subfamily. Homotetramer. In terms of tissue distribution, exclusively expressed in flowers.

The enzyme catalyses an NDP-alpha-D-glucose + D-fructose = a ribonucleoside 5'-diphosphate + sucrose + H(+). Functionally, sucrose-cleaving enzyme that provides UDP-glucose and fructose for various metabolic pathways. In Daucus carota (Wild carrot), this protein is Sucrose synthase isoform 2.